A 272-amino-acid chain; its full sequence is Hydroxyethylthiazole kinase (272 aa).

Met62 provides a ligand contact to substrate. Residues Arg138 and Thr183 each coordinate ATP. Position 210 (Gly210) interacts with substrate.

The protein belongs to the Thz kinase family. Requires Mg(2+) as cofactor.

It carries out the reaction 5-(2-hydroxyethyl)-4-methylthiazole + ATP = 4-methyl-5-(2-phosphooxyethyl)-thiazole + ADP + H(+). Its pathway is cofactor biosynthesis; thiamine diphosphate biosynthesis; 4-methyl-5-(2-phosphoethyl)-thiazole from 5-(2-hydroxyethyl)-4-methylthiazole: step 1/1. Its function is as follows. Catalyzes the phosphorylation of the hydroxyl group of 4-methyl-5-beta-hydroxyethylthiazole (THZ). This chain is Hydroxyethylthiazole kinase, found in Dichelobacter nodosus (strain VCS1703A).